The chain runs to 503 residues: D-xylose-proton symporter-like 1 (503 aa).

The interval 1–23 is disordered; sequence MGFDPENQSISSVGQVVGDSSSG. The segment covering 8-23 has biased composition (low complexity); sequence QSISSVGQVVGDSSSG. The next 12 helical transmembrane spans lie at 51 to 73, 95 to 115, 129 to 149, 152 to 172, 190 to 210, 213 to 233, 305 to 325, 346 to 366, 374 to 394, 405 to 425, 437 to 457, and 467 to 487; these read FLFPALGALLFGYEIGATSCAIM, IITSGSLYGALIGSIVAFSVA, FLYLVGAIVTVVAPVFSILII, VTYGMGIGLTMHAAPMYIAET, VLGMVGGYGIGSLWITVISGW, MYATILPFPVIMGTGMCWLPA, ALTIAGGLVLFQQITGQPSVL, ISILLGLLKLVMTGVSVIVID, LLCGVSGMVISLFLLGSYYMF, ALLLYVGCYQLSFGPIGWLMI, GISLAVLVNFGANALVTFAFS, and ILFCAFGVICVVSLFFIYYIV.

This sequence belongs to the major facilitator superfamily. Sugar transporter (TC 2.A.1.1) family.

Its subcellular location is the membrane. This is D-xylose-proton symporter-like 1 from Arabidopsis thaliana (Mouse-ear cress).